A 639-amino-acid polypeptide reads, in one-letter code: Chaperone protein DnaK (639 aa).

Thr198 carries the post-translational modification Phosphothreonine; by autocatalysis. The segment covering 603 to 618 (AKAQTQGGAQEGAAKQ) has biased composition (low complexity). Residues 603–639 (AKAQTQGGAQEGAAKQSNATADDVVDAEFEEVKDDKK) are disordered. The segment covering 625–639 (DVVDAEFEEVKDDKK) has biased composition (acidic residues).

The protein belongs to the heat shock protein 70 family.

In terms of biological role, acts as a chaperone. This is Chaperone protein DnaK from Shewanella oneidensis (strain ATCC 700550 / JCM 31522 / CIP 106686 / LMG 19005 / NCIMB 14063 / MR-1).